Here is a 298-residue protein sequence, read N- to C-terminus: Nucleotide-binding protein Dred_3054 (298 aa).

20–27 (GMSGAGKT) contributes to the ATP binding site. 71–74 (DIRG) provides a ligand contact to GTP.

Belongs to the RapZ-like family.

Displays ATPase and GTPase activities. The sequence is that of Nucleotide-binding protein Dred_3054 from Desulforamulus reducens (strain ATCC BAA-1160 / DSM 100696 / MI-1) (Desulfotomaculum reducens).